Reading from the N-terminus, the 397-residue chain is Galactokinase (397 aa).

A disordered region spans residues 1-27 (MGEAVGEPSASGSGSCTGRSRRGCGRR). Low complexity predominate over residues 9–18 (SASGSGSCTG). 36–39 (EHTD) contacts substrate. Residues Ser-69 and 124-130 (GAGLSSS) contribute to the ATP site. Ser-130 and Glu-161 together coordinate Mg(2+). Asp-173 serves as the catalytic Proton acceptor. Tyr-225 contacts substrate.

This sequence belongs to the GHMP kinase family. GalK subfamily.

The protein localises to the cytoplasm. The catalysed reaction is alpha-D-galactose + ATP = alpha-D-galactose 1-phosphate + ADP + H(+). It functions in the pathway carbohydrate metabolism; galactose metabolism. Its function is as follows. Catalyzes the transfer of the gamma-phosphate of ATP to D-galactose to form alpha-D-galactose-1-phosphate (Gal-1-P). The protein is Galactokinase of Streptomyces lividans.